The following is a 356-amino-acid chain: Dihydroorotate dehydrogenase (quinone) (356 aa).

Residues 60-64 (AGFDK) and S84 each bind FMN. K64 is a substrate binding site. Residue 109-113 (NRFGF) participates in substrate binding. FMN contacts are provided by N140 and N171. N171 contacts substrate. S174 serves as the catalytic Nucleophile. N176 provides a ligand contact to substrate. FMN-binding residues include K216 and G244. 245-246 (NT) is a binding site for substrate. Residues G267, G296, and 317–318 (YS) each bind FMN.

Belongs to the dihydroorotate dehydrogenase family. Type 2 subfamily. As to quaternary structure, monomer. Requires FMN as cofactor.

The protein localises to the cell membrane. It catalyses the reaction (S)-dihydroorotate + a quinone = orotate + a quinol. The protein operates within pyrimidine metabolism; UMP biosynthesis via de novo pathway; orotate from (S)-dihydroorotate (quinone route): step 1/1. In terms of biological role, catalyzes the conversion of dihydroorotate to orotate with quinone as electron acceptor. The protein is Dihydroorotate dehydrogenase (quinone) of Azorhizobium caulinodans (strain ATCC 43989 / DSM 5975 / JCM 20966 / LMG 6465 / NBRC 14845 / NCIMB 13405 / ORS 571).